Consider the following 413-residue polypeptide: Serine hydroxymethyltransferase (413 aa).

(6S)-5,6,7,8-tetrahydrofolate is bound by residues Leu-119 and 123–125 (GHL). Position 228 is an N6-(pyridoxal phosphate)lysine (Lys-228). Residue 351–353 (SPF) participates in (6S)-5,6,7,8-tetrahydrofolate binding.

This sequence belongs to the SHMT family. As to quaternary structure, homodimer. Pyridoxal 5'-phosphate is required as a cofactor.

The protein resides in the cytoplasm. It catalyses the reaction (6R)-5,10-methylene-5,6,7,8-tetrahydrofolate + glycine + H2O = (6S)-5,6,7,8-tetrahydrofolate + L-serine. Its pathway is one-carbon metabolism; tetrahydrofolate interconversion. The protein operates within amino-acid biosynthesis; glycine biosynthesis; glycine from L-serine: step 1/1. Functionally, catalyzes the reversible interconversion of serine and glycine with tetrahydrofolate (THF) serving as the one-carbon carrier. This reaction serves as the major source of one-carbon groups required for the biosynthesis of purines, thymidylate, methionine, and other important biomolecules. Also exhibits THF-independent aldolase activity toward beta-hydroxyamino acids, producing glycine and aldehydes, via a retro-aldol mechanism. The polypeptide is Serine hydroxymethyltransferase (Lysinibacillus sphaericus (strain C3-41)).